Here is a 100-residue protein sequence, read N- to C-terminus: A-type ATP synthase subunit F (100 aa).

Belongs to the V-ATPase F subunit family. As to quaternary structure, has multiple subunits with at least A(3), B(3), C, D, E, F, H, I and proteolipid K(x).

Its subcellular location is the cell membrane. Component of the A-type ATP synthase that produces ATP from ADP in the presence of a proton gradient across the membrane. The protein is A-type ATP synthase subunit F of Methanoregula boonei (strain DSM 21154 / JCM 14090 / 6A8).